A 349-amino-acid chain; its full sequence is Selenide, water dikinase (349 aa).

Residue Cys-17 is part of the active site. ATP-binding positions include Lys-20 and 48–50; that span reads MAD. Mg(2+) is bound at residue Asp-51. ATP-binding positions include Asp-68, Asp-91, and 139–141; that span reads GHS. Position 91 (Asp-91) interacts with Mg(2+). Asp-227 serves as a coordination point for Mg(2+).

Belongs to the selenophosphate synthase 1 family. Class I subfamily. As to quaternary structure, homodimer. Mg(2+) is required as a cofactor.

It catalyses the reaction hydrogenselenide + ATP + H2O = selenophosphate + AMP + phosphate + 2 H(+). In terms of biological role, synthesizes selenophosphate from selenide and ATP. This is Selenide, water dikinase from Rhizobium meliloti (strain 1021) (Ensifer meliloti).